The following is a 914-amino-acid chain: Effector protein hopAE1 (914 aa).

Residues 1 to 13 (MMPSQITRSSHSS) are compositionally biased toward polar residues. Residues 1–31 (MMPSQITRSSHSSLPEVAPASGDAAGVSEQT) form a disordered region.

It belongs to the HopW family.

It is found in the secreted. In Pseudomonas syringae pv. syringae (strain B728a), this protein is Effector protein hopAE1 (hopAE1).